We begin with the raw amino-acid sequence, 436 residues long: Putative permease MJ0326 (436 aa).

Helical transmembrane passes span 24 to 44 (LAGI…PQIL), 51 to 71 (FGAV…VMGL), 79 to 99 (LAPG…GMGI), 103 to 123 (VALG…LTKI), 139 to 159 (TAVG…GIIV), 171 to 191 (LMEP…ILVS), 194 to 214 (VIGA…ILGI), 235 to 255 (LDIM…FFFV), 322 to 342 (GFVS…YPVV), 345 to 365 (IPPY…MRSV), 381 to 401 (ITLL…LGFI), and 416 to 436 (VHWL…YLSG).

This sequence belongs to the nucleobase:cation symporter-2 (NCS2) (TC 2.A.40) family. Azg-like subfamily.

The protein localises to the cell membrane. The sequence is that of Putative permease MJ0326 from Methanocaldococcus jannaschii (strain ATCC 43067 / DSM 2661 / JAL-1 / JCM 10045 / NBRC 100440) (Methanococcus jannaschii).